The chain runs to 1024 residues: MIMITDSLAVVLQRRDWENPGVTQLNRLAAHPPFASWRNSEEARTDRPSQQLRSLNGEWRFAWFPAPEAVPESWLECDLPEADTVVVPSNWQMHGYDAPIYTNVTYPITVNPPFVPAENPTGCYSLTFNIDESWLQEGQTRIIFDGVNSAFHLWCNGRWVGYGQDSRLPSEFDLSAFLRAGKNRLAVMVLRWSDGSYLEDQDMWRMSGIFRDVSLLHKPSTQISDFHVATHFNDDFSRAVLEAEVQMYGELRDELRVTVSLWQGETQVASGTAPFGGEIIDERGGYADRVTLRLNVENPALWSAEIPNLYRAVVELHTDDGTLIEAEACDVGFREVRIENGLLLLNGKPLLIRGVNRHEHHPLHGQVMDEQTMVQDILLMKQNNFNAVRCSHYPNHPLWYTLCDRFGLYVVDEANIETHGMVPMNRLTDDPRWLPAMSERVTRMVQRDRNHPSVIIWSLGNESGHGANHDALYRWIKSVDPSRPVQYEGGGADTTATDIICPMYARVDEDQPFPAVPKWSIKKWLSLPGETRPLILCEYAHAMGNSLGGFAKYWQAFRQYPRLQGGFVWDWVDQSLIKYDENGNPWSAYGGDFGDTPNDRQFCMNGLVFADRTPHPALTEAKHQQQFFQFRLSGQTIEVTSEYLFRHSDNELLHWSVALDGKPLASGEMPLDVAPQDKQLIELPELPQPESAGQLWLTVHVVQPNATAWSEAGHISAWQQWRLAENLSVTLPAAPHAIPQLTTSETDFCIELGNKRWQFNRQSGFLSQMWIGAEKQLLTPLRDQFTRAPLDNDIGVSEATRIDPNAWVERWKAAGHYQAEAALLQCTADTLADAVLITTAHAWQHQGKTLFISRKTYRIDGSGQMAITVDVEVASDTPHPARIGLTCQLAQVAERVNWLGLGPQENYPDRLTAACFDRWDLPLSDMYTPYVFPSENGLRCGTRELNYGPHQWRGDFQFNISRYSQQQLMETSHRHLLHAEEGTWLNIDGFHMGIGGDDSWSPSVSAEFQLSAGSYHYQLVWCQK.

Residues asparagine 103 and aspartate 202 each contribute to the substrate site. Aspartate 202 is a Na(+) binding site. Residues glutamate 417, histidine 419, and glutamate 462 each contribute to the Mg(2+) site. Residues glutamate 462 and 538–541 (EYAH) contribute to the substrate site. Residue glutamate 462 is the Proton donor of the active site. The active-site Nucleophile is glutamate 538. Mg(2+) is bound at residue asparagine 598. Residues phenylalanine 602 and asparagine 605 each coordinate Na(+). Positions 605 and 1000 each coordinate substrate.

This sequence belongs to the glycosyl hydrolase 2 family. Homotetramer. The cofactor is Mg(2+). Requires Na(+) as cofactor.

The enzyme catalyses Hydrolysis of terminal non-reducing beta-D-galactose residues in beta-D-galactosides.. The protein is Beta-galactosidase of Shigella sonnei (strain Ss046).